Reading from the N-terminus, the 150-residue chain is Thyroid hormone-inducible hepatic protein (150 aa).

Residues 83 to 105 are disordered; sequence KVAGNEGSEAENEAAETEEAEED. S90 carries the phosphoserine modification. The segment covering 90–105 has biased composition (acidic residues); the sequence is SEAENEAAETEEAEED.

This sequence belongs to the SPOT14 family. As to quaternary structure, homodimer. Heterodimer with MID1IP1. Interacts with THRB and PLAGL1. In terms of tissue distribution, highly expressed in liver, lactating mammary gland, epididymal, retroperitoneal and brown fat. Mainly expressed in tissues that synthesize triglycerides.

The protein resides in the nucleus. It is found in the cytoplasm. In terms of biological role, plays a role in the regulation of lipogenesis, especially in lactating mammary gland. Important for the biosynthesis of triglycerides with medium-length fatty acid chains. May modulate lipogenesis by interacting with MID1IP1 and preventing its interaction with ACACA. May function as transcriptional coactivator. May modulate the transcription factor activity of THRB. The protein is Thyroid hormone-inducible hepatic protein (Thrsp) of Rattus norvegicus (Rat).